The chain runs to 76 residues: uncharacterized protein (76 aa).

Positions 1-28 are disordered; that stretch reads MSTEKLEASEEPQAPLANTSETNSIKGD. Over residues 16–26 the composition is skewed to polar residues; the sequence is LANTSETNSIK.

The protein localises to the cytoplasm. The protein resides in the bud. It is found in the bud neck. This is an uncharacterized protein from Saccharomyces cerevisiae (strain ATCC 204508 / S288c) (Baker's yeast).